The following is a 498-amino-acid chain: Minor fimbrium subunit Mfa1 (498 aa).

The N-terminal stretch at 1 to 19 (MKLNKMFLVGALLSLGFAS) is a signal peptide. C20 is lipidated: N-palmitoyl cysteine. C20 carries S-diacylglycerol cysteine lipidation. The propeptide occupies 20–50 (CSKEGNGPAPDSSSTADTHMSVSMSLPQHNR). The disordered stretch occupies residues 436–476 (SGNPFVPTDPDPNNPDTPDNPDTPDPEDPDTPNPEEPLPVQ).

The protein belongs to the bacteroidetes fimbrillin superfamily. FimA/Mfa1 family. In terms of assembly, structural component of the fimbrial stalk. Minor fimbriae are composed of a structural subunit, most often Mfa1, and the accessory subunits Mfa3, Mfa4 and Mfa5. Mfa1 interacts with Mfa2; this anchors the fimbrium in the membrane. Fimbrium assembly occurs by linear, head-to-tail oligomerization of fimbrial subunits. This is mediated via insertion of a C-terminal beta-strand from one subunit into a groove in the N-terminal domain of the following subunit.

The protein localises to the fimbrium. It is found in the cell outer membrane. Its function is as follows. Structural subunit of the minor fimbriae. These filamentous pili are attached to the cell surface; they mediate biofilm formation, adhesion onto host cells and onto other bacteria that are part of the oral microbiome. They play an important role in invasion of periodontal tissues and are recognized as major virulence factors. Mfa1 orthologs from different strains have highly divergent sequences, and this correlates with pathogenicity. In Porphyromonas gingivalis (Bacteroides gingivalis), this protein is Minor fimbrium subunit Mfa1.